Here is a 612-residue protein sequence, read N- to C-terminus: tRNA uridine 5-carboxymethylaminomethyl modification enzyme MnmG (612 aa).

FAD is bound at residue 9–14 (GAGHAG). 270–284 (GPLYCPSIEDKVFKF) serves as a coordination point for NAD(+).

Belongs to the MnmG family. As to quaternary structure, homodimer. Heterotetramer of two MnmE and two MnmG subunits. FAD is required as a cofactor.

It is found in the cytoplasm. In terms of biological role, NAD-binding protein involved in the addition of a carboxymethylaminomethyl (cmnm) group at the wobble position (U34) of certain tRNAs, forming tRNA-cmnm(5)s(2)U34. The chain is tRNA uridine 5-carboxymethylaminomethyl modification enzyme MnmG from Mycoplasma genitalium (strain ATCC 33530 / DSM 19775 / NCTC 10195 / G37) (Mycoplasmoides genitalium).